The sequence spans 359 residues: Putative nucleotidyltransferase MAB21L1 (359 aa).

Residues 23-24 and 63-66 contribute to the a ribonucleoside 5'-triphosphate site; these read RK and YEGL. Mg(2+)-binding residues include Glu-73 and Glu-75. Residues Lys-248 and 252–255 contribute to the a ribonucleoside 5'-triphosphate site; that span reads SILK.

Belongs to the mab-21 family. Monomer. Homodecamer; composed of 2 back to back homopentamers. The protein may exist as monomer in solution and oiligomerizes upon ligand binding.

The protein resides in the nucleus. Functionally, putative nucleotidyltransferase required for several aspects of embryonic development including normal development of the eye. It is unclear whether it displays nucleotidyltransferase activity in vivo. Binds single-stranded RNA (ssRNA). In Bos taurus (Bovine), this protein is Putative nucleotidyltransferase MAB21L1 (MAB21L1).